Consider the following 20-residue polypeptide: Mite allergen Der p 6 (20 aa).

In terms of domain architecture, Peptidase S1 spans 1–20 (AIGXQPAAEAEAPFQISLMK).

This sequence belongs to the peptidase S1 family.

The protein localises to the secreted. In terms of biological role, protease that shows specificity similar to chymotrypsin. The protein is Mite allergen Der p 6 (DERP6) of Dermatophagoides pteronyssinus (European house dust mite).